Consider the following 396-residue polypeptide: NADH-quinone oxidoreductase subunit D 1 (396 aa).

Belongs to the complex I 49 kDa subunit family. As to quaternary structure, NDH-1 is composed of 14 different subunits. Subunits NuoB, C, D, E, F, and G constitute the peripheral sector of the complex.

The protein localises to the cell inner membrane. The enzyme catalyses a quinone + NADH + 5 H(+)(in) = a quinol + NAD(+) + 4 H(+)(out). Functionally, NDH-1 shuttles electrons from NADH, via FMN and iron-sulfur (Fe-S) centers, to quinones in the respiratory chain. The immediate electron acceptor for the enzyme in this species is believed to be ubiquinone. Couples the redox reaction to proton translocation (for every two electrons transferred, four hydrogen ions are translocated across the cytoplasmic membrane), and thus conserves the redox energy in a proton gradient. The chain is NADH-quinone oxidoreductase subunit D 1 from Rhizobium etli (strain ATCC 51251 / DSM 11541 / JCM 21823 / NBRC 15573 / CFN 42).